Here is a 178-residue protein sequence, read N- to C-terminus: Large ribosomal subunit protein uL6 (178 aa).

Belongs to the universal ribosomal protein uL6 family. As to quaternary structure, part of the 50S ribosomal subunit.

Functionally, this protein binds to the 23S rRNA, and is important in its secondary structure. It is located near the subunit interface in the base of the L7/L12 stalk, and near the tRNA binding site of the peptidyltransferase center. The protein is Large ribosomal subunit protein uL6 of Francisella philomiragia subsp. philomiragia (strain ATCC 25017 / CCUG 19701 / FSC 153 / O#319-036).